The sequence spans 347 residues: Chlorophyllase type 0 (347 aa).

The first 19 residues, 1 to 19 (MAKLLLLIFGVFIFVNSQA), serve as a signal peptide directing secretion. The propeptide occupies 20–30 (QTFPTILEKHN). The GXSXG motif lies at 160 to 164 (GHSRG). Residue S162 is the Nucleophile of the active site. D191 (charge relay system) is an active-site residue. N-linked (GlcNAc...) asparagine glycans are attached at residues N215, N229, and N251. H262 (charge relay system) is an active-site residue. N321 carries N-linked (GlcNAc...) asparagine glycosylation.

This sequence belongs to the AB hydrolase superfamily. Lipase family.

It catalyses the reaction a chlorophyll + H2O = a chlorophyllide + phytol + H(+). It carries out the reaction chlorophyll a + H2O = phytol + chlorophyllide a + H(+). Its pathway is porphyrin-containing compound metabolism; chlorophyll degradation. With respect to regulation, inhibited by diisopropyl fluorophosphate (DFP), phenylmethanesulfonyl fluoride (PMSF) or p-chloromercuribenzoic acid (PCMB), but not by N-ethylmaleimide (NEM) or iodoacetamide. Catalyzes the hydrolysis of ester bond in chlorophyll to yield chlorophyllide and phytol. The sequence is that of Chlorophyllase type 0 from Chenopodium album (Fat hen).